Here is a 109-residue protein sequence, read N- to C-terminus: Cell division protein ZapA (109 aa).

Residues 21–99 (PEQLDALNQA…IEQALLEQGR (79 aa)) are a coiled coil.

Belongs to the ZapA family. Type 1 subfamily. Homodimer. Interacts with FtsZ.

Its subcellular location is the cytoplasm. In terms of biological role, activator of cell division through the inhibition of FtsZ GTPase activity, therefore promoting FtsZ assembly into bundles of protofilaments necessary for the formation of the division Z ring. It is recruited early at mid-cell but it is not essential for cell division. This is Cell division protein ZapA from Edwardsiella ictaluri (strain 93-146).